A 335-amino-acid chain; its full sequence is Methionine import ATP-binding protein MetN 1 (335 aa).

In terms of domain architecture, ABC transporter spans 2-242 (IEFQNVHKTY…PKHPTTKRFV (241 aa)). 38 to 45 (GHSGAGKS) contributes to the ATP binding site.

It belongs to the ABC transporter superfamily. Methionine importer (TC 3.A.1.24) family. The complex is composed of two ATP-binding proteins (MetN), two transmembrane proteins (MetI) and a solute-binding protein (MetQ).

It is found in the cell inner membrane. The catalysed reaction is L-methionine(out) + ATP + H2O = L-methionine(in) + ADP + phosphate + H(+). The enzyme catalyses D-methionine(out) + ATP + H2O = D-methionine(in) + ADP + phosphate + H(+). In terms of biological role, part of the ABC transporter complex MetNIQ involved in methionine import. Responsible for energy coupling to the transport system. The polypeptide is Methionine import ATP-binding protein MetN 1 (Pseudomonas fluorescens (strain Pf0-1)).